Consider the following 181-residue polypeptide: Adenylyl-sulfate kinase (181 aa).

Residue G12 to T19 coordinates ATP. The Phosphoserine intermediate role is filled by S86.

This sequence belongs to the APS kinase family.

It carries out the reaction adenosine 5'-phosphosulfate + ATP = 3'-phosphoadenylyl sulfate + ADP + H(+). It functions in the pathway sulfur metabolism; hydrogen sulfide biosynthesis; sulfite from sulfate: step 2/3. Its function is as follows. Catalyzes the synthesis of activated sulfate. The protein is Adenylyl-sulfate kinase of Rippkaea orientalis (strain PCC 8801 / RF-1) (Cyanothece sp. (strain PCC 8801)).